Reading from the N-terminus, the 378-residue chain is Succinate--CoA ligase [ADP-forming] subunit beta (378 aa).

The 229-residue stretch at 9-237 folds into the ATP-grasp domain; that stretch reads RDIVARYGIP…IAGEPESEIK (229 aa). Residues Lys45, 52–54, Ile94, and Glu99 each bind ATP; that span reads GRG. Asn192 and Asp206 together coordinate Mg(2+). Substrate contacts are provided by residues Asn257 and 314–316; that span reads GIT.

The protein belongs to the succinate/malate CoA ligase beta subunit family. Heterotetramer of two alpha and two beta subunits. It depends on Mg(2+) as a cofactor.

The catalysed reaction is succinate + ATP + CoA = succinyl-CoA + ADP + phosphate. It catalyses the reaction GTP + succinate + CoA = succinyl-CoA + GDP + phosphate. Its pathway is carbohydrate metabolism; tricarboxylic acid cycle; succinate from succinyl-CoA (ligase route): step 1/1. Its function is as follows. Succinyl-CoA synthetase functions in the citric acid cycle (TCA), coupling the hydrolysis of succinyl-CoA to the synthesis of either ATP or GTP and thus represents the only step of substrate-level phosphorylation in the TCA. The beta subunit provides nucleotide specificity of the enzyme and binds the substrate succinate, while the binding sites for coenzyme A and phosphate are found in the alpha subunit. This chain is Succinate--CoA ligase [ADP-forming] subunit beta, found in Herpetosiphon aurantiacus (strain ATCC 23779 / DSM 785 / 114-95).